The sequence spans 492 residues: N-succinylglutamate 5-semialdehyde dehydrogenase (492 aa).

220 to 225 (GSANTG) is a binding site for NAD(+). Active-site residues include glutamate 243 and cysteine 277.

It belongs to the aldehyde dehydrogenase family. AstD subfamily.

The catalysed reaction is N-succinyl-L-glutamate 5-semialdehyde + NAD(+) + H2O = N-succinyl-L-glutamate + NADH + 2 H(+). The protein operates within amino-acid degradation; L-arginine degradation via AST pathway; L-glutamate and succinate from L-arginine: step 4/5. Functionally, catalyzes the NAD-dependent reduction of succinylglutamate semialdehyde into succinylglutamate. The sequence is that of N-succinylglutamate 5-semialdehyde dehydrogenase from Escherichia coli O81 (strain ED1a).